The following is a 269-amino-acid chain: Tryptophan synthase alpha chain (269 aa).

Residues Glu-49 and Asp-60 each act as proton acceptor in the active site.

The protein belongs to the TrpA family. In terms of assembly, tetramer of two alpha and two beta chains.

It catalyses the reaction (1S,2R)-1-C-(indol-3-yl)glycerol 3-phosphate + L-serine = D-glyceraldehyde 3-phosphate + L-tryptophan + H2O. It participates in amino-acid biosynthesis; L-tryptophan biosynthesis; L-tryptophan from chorismate: step 5/5. Functionally, the alpha subunit is responsible for the aldol cleavage of indoleglycerol phosphate to indole and glyceraldehyde 3-phosphate. This chain is Tryptophan synthase alpha chain, found in Delftia acidovorans (strain DSM 14801 / SPH-1).